A 150-amino-acid chain; its full sequence is Putative F-box protein At2g33655 (150 aa).

Residues 1–47 (MEKMSDLPRELVEEILSRVPVKSMREVRVTCKTWNALSKHISKAEAA) form the F-box domain.

The sequence is that of Putative F-box protein At2g33655 from Arabidopsis thaliana (Mouse-ear cress).